A 495-amino-acid chain; its full sequence is Pleckstrin homology domain-containing family O member 2 (495 aa).

The 103-residue stretch at 18–120 folds into the PH domain; that stretch reads TADKAGWIKK…WIKALNEGIN (103 aa). A phosphoserine mark is found at S165 and S168. Positions 171–411 are disordered; sequence LSRLDLDVPD…ESPQHPRLPK (241 aa). Positions 198–213 are enriched in pro residues; that stretch reads QEPPRALMPPVKPSPG. A Phosphothreonine modification is found at T233. Positions 235–244 are enriched in polar residues; sequence DSASSGANPE. Phosphoserine is present on residues S236, S238, S239, S274, and S292. T296 is subject to Phosphothreonine. The span at 324–335 shows a compositional bias: low complexity; the sequence is SGVDASGSSQSS. Positions 336 to 350 are enriched in polar residues; it reads EAPETTSPEPTQVSV. S395 bears the Phosphoserine mark. The segment covering 399 to 411 has biased composition (basic and acidic residues); sequence LLRESPQHPRLPK. The stretch at 444 to 469 forms a coiled coil; the sequence is CAESLLSQAVEQLRQATQVLQEMRDL.

The protein is Pleckstrin homology domain-containing family O member 2 (Plekho2) of Mus musculus (Mouse).